Reading from the N-terminus, the 64-residue chain is Large ribosomal subunit protein bL35 (64 aa).

This sequence belongs to the bacterial ribosomal protein bL35 family.

In Streptomyces coelicolor (strain ATCC BAA-471 / A3(2) / M145), this protein is Large ribosomal subunit protein bL35.